We begin with the raw amino-acid sequence, 502 residues long: Lysine--tRNA ligase (502 aa).

Positions 413 and 420 each coordinate Mg(2+).

It belongs to the class-II aminoacyl-tRNA synthetase family. In terms of assembly, homodimer. Requires Mg(2+) as cofactor.

It is found in the cytoplasm. The catalysed reaction is tRNA(Lys) + L-lysine + ATP = L-lysyl-tRNA(Lys) + AMP + diphosphate. This chain is Lysine--tRNA ligase, found in Haemophilus influenzae (strain PittGG).